Consider the following 552-residue polypeptide: Keratin, type II cytoskeletal 6A (552 aa).

Positions 1 to 14 (MSTKTVIRSQTSHR) are enriched in polar residues. Residues 1–21 (MSTKTVIRSQTSHRGFSAGSA) are disordered. The head stretch occupies residues 1–151 (MSTKTVIRSQ…DPTIQRVRTE (151 aa)). Positions 152 to 187 (EREQIKTLNNKFASFIDKVRFLEQQNKVLDTKWALL) are coil 1A. Positions 152–465 (EREQIKTLNN…TLLEGEECRL (314 aa)) constitute an IF rod domain. Residues 188 to 206 (QEQGTKTVRQGLETLFEQY) form a linker 1 region. Positions 207 to 298 (INDLRKELDN…ALYEAELSQM (92 aa)) are coil 1B. The linker 12 stretch occupies residues 299–322 (QTHISDTSVVLSMDNNRSLDLDSI). Residues 323 to 461 (IAEVKAQYEE…ATYRTLLEGE (139 aa)) form a coil 2 region. The segment at 462–552 (ECRLNGEGVG…TSSTRKSYRP (91 aa)) is tail. A disordered region spans residues 524-552 (ISSGLSSSGGSSSTIKYTTTSSTRKSYRP). Positions 525 to 552 (SSGLSSSGGSSSTIKYTTTSSTRKSYRP) are enriched in low complexity.

This sequence belongs to the intermediate filament family. As to quaternary structure, heterodimer of a type I and a type II keratin. KRT6 isomers associate with KRT16 and/or KRT17. Interacts with TCHP.

Functionally, epidermis-specific type I keratin involved in wound healing. Involved in the activation of follicular keratinocytes after wounding, while it does not play a major role in keratinocyte proliferation or migration. Participates in the regulation of epithelial migration by inhibiting the activity of SRC during wound repair. The protein is Keratin, type II cytoskeletal 6A (Krt6a) of Rattus norvegicus (Rat).